Consider the following 397-residue polypeptide: MHILRFSDLCAQGQARGQRVFIRADLNVPQDDAGRITEDTRIRASVPCIQMALEAGAAVMVTSHLGRPTEGEFKPEDSLAPVAQRLSELLGREVPLVADWVDGVQVQPGQVVLLENCRVNKGEKKNDPELAKKMAQLCDIYVNDAFGTAHRAEGTTYGIAEYAKVACAGPLLAAEIDAIQTALAHPKRPLVAIVAGSKVSTKLTILQSLSKNVDGLVVGGGIANTFMLAAGLPIGKSLAEPDLVNEAKAVIAAMAARGAEVPIPTDVVVAKAFAADAPATVKKASEVAEDDLILDIGPETAAQLAAQLKAAGTIVWNGPVGVFEFDQFAGGTKAIAQAIAESSAFSIAGGGDTLAAIAKYGIEKDVGYISTGGGAFLEVLEGKTLPAIEILQKRAAG.

Substrate contacts are provided by residues 25–27 (DLN), R41, 64–67 (HLGR), R118, and R151. ATP contacts are provided by residues K202, E324, and 350 to 353 (GGDT).

It belongs to the phosphoglycerate kinase family. In terms of assembly, monomer.

The protein resides in the cytoplasm. The enzyme catalyses (2R)-3-phosphoglycerate + ATP = (2R)-3-phospho-glyceroyl phosphate + ADP. It participates in carbohydrate degradation; glycolysis; pyruvate from D-glyceraldehyde 3-phosphate: step 2/5. This Acidovorax sp. (strain JS42) protein is Phosphoglycerate kinase.